Reading from the N-terminus, the 586-residue chain is YTH domain-containing family protein 2 (586 aa).

3 disordered regions span residues 98–128 (LKEKVKQSRALRQSVNNAAEQQPSTKPQPVQ), 141–181 (SQDQ…KESP), and 301–464 (QGLA…PLVS). 3 stretches are compositionally biased toward polar residues: residues 107–128 (ALRQSVNNAAEQQPSTKPQPVQ), 169–181 (TLPTTPRTIKESP), and 352–368 (SSQAALSCKSKQSTDIQ). Positions 398 to 418 (CARRHRSSSPRGRSGSHKSRR) are enriched in basic residues. A compositionally biased stretch (polar residues) spans 421 to 436 (TDSPVSRSTTKSTPSR). Residues 435–576 (SRARQPGHRD…YCGRDLLRLM (142 aa)) form the YTH domain. Residues 441 to 458 (GHRDYREYRDDRNRDTKP) are compositionally biased toward basic and acidic residues.

Belongs to the YTHDF family. YTHDF1 subfamily.

In terms of biological role, specifically recognizes and binds N6-methyladenosine (m6A)-containing mRNAs, and regulates their stability. M6A is a modification present at internal sites of mRNAs and some non-coding RNAs and plays a role in mRNA stability and processing. Plays a role in pathogenicity towards plant host. This Pyricularia oryzae (strain 70-15 / ATCC MYA-4617 / FGSC 8958) (Rice blast fungus) protein is YTH domain-containing family protein 2.